An 802-amino-acid chain; its full sequence is Peptidyl serine alpha-galactosyltransferase (802 aa).

Residues 1 to 19 (MRWDLITAIVAALVVSVLA) form the signal peptide. Over 20–750 (DESGQMAPYR…SEGRFSTLKL (731 aa)) the chain is Extracellular. Asparagine 214, asparagine 275, asparagine 425, and asparagine 637 each carry an N-linked (GlcNAc...) asparagine glycan. A disordered region spans residues 699-741 (RNCPEPGSESTEKISVSRKVGNIETKQTQGSDETKESSGSSES). A helical transmembrane segment spans residues 751–771 (WVIALWLISGVGFLVVMLLVF). Residues 772-802 (STRRGRGTTRGKGYRNKRRTSYSNTGFLDTK) lie on the Cytoplasmic side of the membrane. Over residues 777–791 (RGTTRGKGYRNKRRT) the composition is skewed to basic residues. The interval 777-802 (RGTTRGKGYRNKRRTSYSNTGFLDTK) is disordered. The span at 792 to 802 (SYSNTGFLDTK) shows a compositional bias: polar residues.

Its subcellular location is the endoplasmic reticulum membrane. Its function is as follows. Glycosyltransferase involved in the O-galactosylation of several proteins including extensins. Catalyzes the transfer of alpha-galactosyl to Ser residues. Hydroxylation of proline residues adjacent to the serine acceptor is required for activity. This chain is Peptidyl serine alpha-galactosyltransferase, found in Arabidopsis thaliana (Mouse-ear cress).